A 122-amino-acid chain; its full sequence is Large ribosomal subunit protein uL14c (122 aa).

The protein belongs to the universal ribosomal protein uL14 family. In terms of assembly, part of the 50S ribosomal subunit.

The protein localises to the plastid. It is found in the chloroplast. Binds to 23S rRNA. This Phaseolus vulgaris (Kidney bean) protein is Large ribosomal subunit protein uL14c.